A 76-amino-acid chain; its full sequence is Small ribosomal subunit protein bS18 (76 aa).

This sequence belongs to the bacterial ribosomal protein bS18 family. In terms of assembly, part of the 30S ribosomal subunit. Forms a tight heterodimer with protein bS6.

In terms of biological role, binds as a heterodimer with protein bS6 to the central domain of the 16S rRNA, where it helps stabilize the platform of the 30S subunit. In Alcanivorax borkumensis (strain ATCC 700651 / DSM 11573 / NCIMB 13689 / SK2), this protein is Small ribosomal subunit protein bS18.